Here is a 40-residue protein sequence, read N- to C-terminus: INFGAIKAILKKWGKKLVEYALKHKDLYAPYIKKHLCEKL.

It belongs to the ectatomin family. Ectatomin-Eq subfamily. Heterodimer of subunits A and B; disulfide-linked. As to expression, expressed by the venom gland.

It is found in the secreted. The protein resides in the target cell membrane. The polypeptide is U1-ectatotoxin-Eb1a subunit A (Ectatomma brunneum (Ant)).